The chain runs to 553 residues: Glutamate--tRNA ligase (553 aa).

The 'HIGH' region signature appears at 41-51 (PSPTGFQHIGG). The short motif at 293 to 297 (KLSKR) is the 'KMSKS' region element. An ATP-binding site is contributed by Lys296.

It belongs to the class-I aminoacyl-tRNA synthetase family. Glutamate--tRNA ligase type 1 subfamily. In terms of assembly, monomer.

Its subcellular location is the cytoplasm. It carries out the reaction tRNA(Glu) + L-glutamate + ATP = L-glutamyl-tRNA(Glu) + AMP + diphosphate. Functionally, catalyzes the attachment of glutamate to tRNA(Glu) in a two-step reaction: glutamate is first activated by ATP to form Glu-AMP and then transferred to the acceptor end of tRNA(Glu). The polypeptide is Glutamate--tRNA ligase (Clostridium beijerinckii (strain ATCC 51743 / NCIMB 8052) (Clostridium acetobutylicum)).